We begin with the raw amino-acid sequence, 168 residues long: Crossover junction endodeoxyribonuclease RuvC (168 aa).

Active-site residues include Asp-9, Glu-70, and Asp-145. Residues Asp-9, Glu-70, and Asp-145 each contribute to the Mg(2+) site.

This sequence belongs to the RuvC family. Homodimer which binds Holliday junction (HJ) DNA. The HJ becomes 2-fold symmetrical on binding to RuvC with unstacked arms; it has a different conformation from HJ DNA in complex with RuvA. In the full resolvosome a probable DNA-RuvA(4)-RuvB(12)-RuvC(2) complex forms which resolves the HJ. Mg(2+) serves as cofactor.

The protein localises to the cytoplasm. It carries out the reaction Endonucleolytic cleavage at a junction such as a reciprocal single-stranded crossover between two homologous DNA duplexes (Holliday junction).. The RuvA-RuvB-RuvC complex processes Holliday junction (HJ) DNA during genetic recombination and DNA repair. Endonuclease that resolves HJ intermediates. Cleaves cruciform DNA by making single-stranded nicks across the HJ at symmetrical positions within the homologous arms, yielding a 5'-phosphate and a 3'-hydroxyl group; requires a central core of homology in the junction. The consensus cleavage sequence is 5'-(A/T)TT(C/G)-3'. Cleavage occurs on the 3'-side of the TT dinucleotide at the point of strand exchange. HJ branch migration catalyzed by RuvA-RuvB allows RuvC to scan DNA until it finds its consensus sequence, where it cleaves and resolves the cruciform DNA. This is Crossover junction endodeoxyribonuclease RuvC from Chlamydia pneumoniae (Chlamydophila pneumoniae).